A 439-amino-acid polypeptide reads, in one-letter code: Proline--tRNA ligase (439 aa).

Belongs to the class-II aminoacyl-tRNA synthetase family. ProS type 2 subfamily. Homodimer.

Its subcellular location is the cytoplasm. It catalyses the reaction tRNA(Pro) + L-proline + ATP = L-prolyl-tRNA(Pro) + AMP + diphosphate. In terms of biological role, catalyzes the attachment of proline to tRNA(Pro) in a two-step reaction: proline is first activated by ATP to form Pro-AMP and then transferred to the acceptor end of tRNA(Pro). This Rhodopseudomonas palustris (strain BisA53) protein is Proline--tRNA ligase.